A 164-amino-acid chain; its full sequence is MNIVDQQTFRDAMSCMGAAVNIITTDGPAGRAGFTASAVCSVTDTPPTLLVCLNRGASVWPVFNENRTLCVNTLSAGQEPLSNLFGGKTPMELRFAAARWQTGVTGCPQLEEALVSFDCRISQVVSVGTHDILFCAIEAIHRHATPYGLVWFDRSYHALMRPAC.

Belongs to the non-flavoprotein flavin reductase family. RutF subfamily.

The enzyme catalyses FMNH2 + NAD(+) = FMN + NADH + 2 H(+). In terms of biological role, catalyzes the reduction of FMN to FMNH2 which is used to reduce pyrimidine by RutA via the Rut pathway. The sequence is that of FMN reductase (NADH) RutF from Escherichia coli O45:K1 (strain S88 / ExPEC).